The chain runs to 343 residues: Heme A synthase (343 aa).

The next 8 helical transmembrane spans lie at 13-33 (VAIW…VGGA), 96-116 (HRLL…VFLI), 130-150 (AMLG…SSGL), 161-181 (LMTH…TALD), 197-217 (GWAL…ALVA), 258-278 (FNHR…VVLA), 294-314 (AVAA…MAAV), and 318-338 (LGVL…AFAW). Histidine 260 contributes to the heme binding site. Histidine 322 serves as a coordination point for heme.

This sequence belongs to the COX15/CtaA family. Type 2 subfamily. As to quaternary structure, interacts with CtaB. Heme b is required as a cofactor.

The protein resides in the cell membrane. The catalysed reaction is Fe(II)-heme o + 2 A + H2O = Fe(II)-heme a + 2 AH2. It participates in porphyrin-containing compound metabolism; heme A biosynthesis; heme A from heme O: step 1/1. Catalyzes the conversion of heme O to heme A by two successive hydroxylations of the methyl group at C8. The first hydroxylation forms heme I, the second hydroxylation results in an unstable dihydroxymethyl group, which spontaneously dehydrates, resulting in the formyl group of heme A. The chain is Heme A synthase from Caulobacter vibrioides (strain ATCC 19089 / CIP 103742 / CB 15) (Caulobacter crescentus).